A 234-amino-acid polypeptide reads, in one-letter code: Large ribosomal subunit protein uL1 (234 aa).

Belongs to the universal ribosomal protein uL1 family. In terms of assembly, part of the 50S ribosomal subunit.

Binds directly to 23S rRNA. The L1 stalk is quite mobile in the ribosome, and is involved in E site tRNA release. Its function is as follows. Protein L1 is also a translational repressor protein, it controls the translation of the L11 operon by binding to its mRNA. This chain is Large ribosomal subunit protein uL1, found in Helicobacter pylori (strain Shi470).